Reading from the N-terminus, the 622-residue chain is Low affinity potassium transport system protein Kup (622 aa).

The next 12 helical transmembrane spans lie at 12 to 32 (ITLA…LYTL), 49 to 69 (VFGF…IKYL), 103 to 123 (VIMG…TPAI), 137 to 157 (PQLD…LFMI), 165 to 185 (VGKL…VLGL), 213 to 233 (VSFI…ALYA), 247 to 267 (WFTV…ALLL), 276 to 296 (PFFL…AALA), 337 to 357 (IYIP…IVSF), 363 to 383 (LAAA…ILST), 396 to 416 (FVAL…SANL), and 419 to 439 (LLSG…IMTT).

Belongs to the HAK/KUP transporter (TC 2.A.72) family.

The protein localises to the cell inner membrane. The catalysed reaction is K(+)(in) + H(+)(in) = K(+)(out) + H(+)(out). Responsible for the low-affinity transport of potassium into the cell. Likely operates as a K(+):H(+) symporter. This chain is Low affinity potassium transport system protein Kup, found in Salmonella gallinarum (strain 287/91 / NCTC 13346).